The following is a 542-amino-acid chain: Membrane protein insertase YidC (542 aa).

A run of 5 helical transmembrane segments spans residues 7 to 27 (LLVM…QQDF), 338 to 358 (FALL…IIGV), 417 to 437 (MGGC…YWTF), 455 to 475 (LSAQ…MFLL), and 494 to 514 (FMPV…VLYW).

Belongs to the OXA1/ALB3/YidC family. Type 1 subfamily. As to quaternary structure, interacts with the Sec translocase complex via SecD. Specifically interacts with transmembrane segments of nascent integral membrane proteins during membrane integration.

Its subcellular location is the cell inner membrane. In terms of biological role, required for the insertion and/or proper folding and/or complex formation of integral membrane proteins into the membrane. Involved in integration of membrane proteins that insert both dependently and independently of the Sec translocase complex, as well as at least some lipoproteins. Aids folding of multispanning membrane proteins. The polypeptide is Membrane protein insertase YidC (Actinobacillus pleuropneumoniae serotype 7 (strain AP76)).